A 109-amino-acid chain; its full sequence is Hainantoxin-XVIII-7 (109 aa).

The signal sequence occupies residues 1-18 (MKLSIIIIATSLVIAVVA). Positions 19–46 (FPSKDSKAIENDKTEQRMEIVVQETARA) are excised as a propeptide. Disulfide bonds link Cys47-Cys62, Cys55-Cys68, Cys59-Cys108, and Cys61-Cys81.

It belongs to the neurotoxin 25 family. F7 subfamily. In terms of tissue distribution, expressed by the venom gland.

The protein resides in the secreted. Its function is as follows. Putative ion channel inhibitor. This is Hainantoxin-XVIII-7 from Cyriopagopus hainanus (Chinese bird spider).